The primary structure comprises 1026 residues: Multidrug resistance protein MdtC (1026 aa).

11 helical membrane-spanning segments follow: residues 15–35, 333–353, 360–380, 387–407, 431–451, 463–483, 528–548, 853–873, 897–917, 953–973, and 984–1004; these read ILIA…LPVA, EVEE…FLFL, LIPA…MYLC, LSLM…IVVL, VGFT…PLLL, FAVT…TLTP, LVGV…IAIP, LILI…LYES, LFNA…IGIV, PIMM…LSGG, and ITIV…TPVV.

This sequence belongs to the resistance-nodulation-cell division (RND) (TC 2.A.6) family. MdtC subfamily. In terms of assembly, part of a tripartite efflux system composed of MdtA, MdtB and MdtC. MdtC forms a heteromultimer with MdtB.

It localises to the cell inner membrane. The sequence is that of Multidrug resistance protein MdtC from Salmonella paratyphi C (strain RKS4594).